The sequence spans 498 residues: Pre-glycoprotein polyprotein GP complex (498 aa).

The N-myristoyl glycine; by host moiety is linked to residue Gly2. The Extracellular portion of the chain corresponds to 2-17; that stretch reads GQIVTMFEALPHIIDE. A helical transmembrane segment spans residues 18–33; that stretch reads VINIVIIVLIVITGIK. The Cytoplasmic portion of the chain corresponds to 34 to 58; that stretch reads AVYNFATCGIFALISFLLLAGRSCG. Zn(2+) is bound at residue Cys57. Topologically, residues 59–438 are extracellular; it reads MYGLKGPDIY…QGSTPLALMD (380 aa). Asn85, Asn95, Asn114, Asn124, and Asn171 each carry an N-linked (GlcNAc...) asparagine; by host glycan. 6 disulfides stabilise this stretch: Cys92-Cys239, Cys123-Cys160, Cys184-Cys220, Cys285-Cys298, Cys307-Cys316, and Cys370-Cys391. An N-linked (GlcNAc...) asparagine; by host glycan is attached at Asn232. N-linked (GlcNAc...) asparagine; by host glycosylation is found at Asn371, Asn396, and Asn401. The helical transmembrane segment at 439–459 threads the bilayer; it reads LLMFSTSAYLVSIFLHLVKIP. Over 460-498 the chain is Cytoplasmic; sequence THRHIKGGSCPKPHRLTNKGICSCGAFKVPGVKTVWKRR. Zn(2+) contacts are provided by His461, His463, Cys469, His473, Cys481, and Cys483.

The protein belongs to the arenaviridae GPC protein family. In terms of assembly, interacts with glycoprotein G2. Part of the GP complex (GP-C) together with glycoprotein G1 and glycoprotein G2. The GP-complex interacts with protein Z, which interacts with ribonucleocapsid; these interactions may induce virion budding. Homotrimer; disulfide-linked. In pre-fusion state, G1 homotrimers bind G2 homotrimers via ionic interactions. Part of the GP complex (GP-C) together with glycoprotein G2 and the stable signal peptide. Interacts with the primary host receptor DAG1 on the cell surface. The GP-complex interacts with protein Z, which interacts with ribonucleocapsid; these interactions may induce virion budding. As to quaternary structure, homotrimer. Interacts with the stable signal peptide. In pre-fusion state, G2 homotrimers bind G1 homotrimers via ionic interactions. Part of the GP complex (GP-C) together with glycoprotein G1 and the stable signal peptide. Acidification in the endosome triggers rearrangements, which ultimately leads to a 6 helix bundle formed by the two heptad repeat domains (HR1 and HR2) in post-fusion state. The GP-complex interacts with protein Z, which interacts with ribonucleocapsid; these interactions may induce virion budding. In terms of processing, specific enzymatic cleavages in vivo yield mature proteins. GP-C polyprotein is cleaved in the endoplasmic reticulum by the host protease MBTPS1. Only cleaved glycoprotein is incorporated into virions. Post-translationally, the SSP remains stably associated with the GP complex following cleavage by signal peptidase and plays crucial roles in the trafficking of GP through the secretory pathway. Myristoylation is necessary for GP2-mediated fusion activity. Inhibition of host myristoylation by the compound DDD85646 leads to the abrogation of GP2-mediated fusion upon exposure to low pH and inhibition of viral multiplication.

Its subcellular location is the virion membrane. It is found in the host endoplasmic reticulum membrane. The protein localises to the host Golgi apparatus membrane. It localises to the host cell membrane. Its function is as follows. Functions as a cleaved signal peptide that is retained as the third component of the GP complex (GP-C). Helps to stabilize the spike complex in its native conformation. The SSP is required for efficient glycoprotein expression, post-translational maturation cleavage of G1 and G2, glycoprotein transport to the cell surface plasma membrane, formation of infectious virus particles, and acid pH-dependent glycoprotein-mediated cell fusion. Forms the virion spikes together with glycoprotein G2. The glycoprotein spike trimers are connected to the underlying matrix. Interacts with the host receptor. Mediates virus attachment to the host primary receptor alpha-dystroglycan DAG1 (alpha-DG) at the cell surface. Down-modulates host DAG1. Functionally, forms the virion spikes together with glycoprotein G1. The glycoprotein spike trimers are connected to the underlying matrix. Class I viral fusion protein that directs fusion of viral and host endosomal membranes, leading to delivery of the nucleocapsid into the cytoplasm. Membrane fusion is mediated by irreversible conformational changes induced by acidification. This Homo sapiens (Human) protein is Pre-glycoprotein polyprotein GP complex.